A 247-amino-acid chain; its full sequence is Centromere protein H (247 aa).

The residue at position 1 (Met1) is an N-acetylmethionine. Positions 1-14 are enriched in acidic residues; the sequence is MEEQPQMQDADEPA. Positions 1–34 are disordered; sequence MEEQPQMQDADEPADSGGEGRAGGPPQVAGAQAA. The residue at position 16 (Ser16) is a Phosphoserine. Residues 24-34 are compositionally biased toward low complexity; it reads GPPQVAGAQAA. The stretch at 47–192 forms a coiled coil; that stretch reads RAQTKQQLLE…KIDLDSMENS (146 aa). Lys67 participates in a covalent cross-link: Glycyl lysine isopeptide (Lys-Gly) (interchain with G-Cter in SUMO2). The residue at position 68 (Thr68) is a Phosphothreonine.

It belongs to the CENP-H/MCM16 family. In terms of assembly, self-associates. Component of the CENPA-NAC complex, at least composed of CENPA, CENPC, CENPH, CENPM, CENPN, CENPT and CENPU. The CENPA-NAC complex interacts with the CENPA-CAD complex, composed of CENPI, CENPK, CENPL, CENPO, CENPP, CENPQ, CENPR and CENPS. Interacts directly with CENPK. Interacts with KIF2C and NDC80. Interacts with TRIM36.

The protein localises to the nucleus. Its subcellular location is the chromosome. It is found in the centromere. It localises to the kinetochore. Component of the CENPA-NAC (nucleosome-associated) complex, a complex that plays a central role in assembly of kinetochore proteins, mitotic progression and chromosome segregation. The CENPA-NAC complex recruits the CENPA-CAD (nucleosome distal) complex and may be involved in incorporation of newly synthesized CENPA into centromeres. Required for chromosome congression and efficiently align the chromosomes on a metaphase plate. The sequence is that of Centromere protein H from Homo sapiens (Human).